The primary structure comprises 115 residues: UPF0295 protein BLi00901/BL05075 (115 aa).

2 helical membrane passes run 18–38 (LVFI…SVLL) and 41–61 (VFMI…FWIG).

Belongs to the UPF0295 family.

The protein resides in the cell membrane. In Bacillus licheniformis (strain ATCC 14580 / DSM 13 / JCM 2505 / CCUG 7422 / NBRC 12200 / NCIMB 9375 / NCTC 10341 / NRRL NRS-1264 / Gibson 46), this protein is UPF0295 protein BLi00901/BL05075.